We begin with the raw amino-acid sequence, 303 residues long: Probable endonuclease 4 (303 aa).

Residues H75, H115, E151, D185, H188, H221, D234, H236, and E266 each contribute to the Zn(2+) site.

Belongs to the AP endonuclease 2 family. Requires Zn(2+) as cofactor.

It carries out the reaction Endonucleolytic cleavage to 5'-phosphooligonucleotide end-products.. Its function is as follows. Endonuclease IV plays a role in DNA repair. It cleaves phosphodiester bonds at apurinic or apyrimidinic (AP) sites, generating a 3'-hydroxyl group and a 5'-terminal sugar phosphate. The sequence is that of Probable endonuclease 4 from Ureaplasma parvum serovar 3 (strain ATCC 700970).